The primary structure comprises 493 residues: Probable phospho-2-dehydro-3-deoxyheptonate aldolase, chloroplastic (493 aa).

A chloroplast-targeting transit peptide spans 1–58; that stretch reads MAMSNTSALASKLLPSCKPHQPTLTFFSPSTTCQKKPRSSRPISAAVHVTQPPKTPIS.

The protein belongs to the class-II DAHP synthase family.

The protein localises to the plastid. It is found in the chloroplast. It catalyses the reaction D-erythrose 4-phosphate + phosphoenolpyruvate + H2O = 7-phospho-2-dehydro-3-deoxy-D-arabino-heptonate + phosphate. It participates in metabolic intermediate biosynthesis; chorismate biosynthesis; chorismate from D-erythrose 4-phosphate and phosphoenolpyruvate: step 1/7. In Catharanthus roseus (Madagascar periwinkle), this protein is Probable phospho-2-dehydro-3-deoxyheptonate aldolase, chloroplastic (DHS1).